The sequence spans 37 residues: MKVRPSVKKLCPKCKIIRRHGVVRVICDNPRHKQRQG.

The protein belongs to the bacterial ribosomal protein bL36 family.

This chain is Large ribosomal subunit protein bL36, found in Solidesulfovibrio magneticus (strain ATCC 700980 / DSM 13731 / RS-1) (Desulfovibrio magneticus).